Consider the following 453-residue polypeptide: Vacuolar cation/proton exchanger 1b (453 aa).

Topologically, residues 1–67 are cytoplasmic; it reads MPVSRMMMES…LRSLLANLND (67 aa). The chain crosses the membrane as a helical span at residues 68–85; sequence VLLTTRLFLLFPAVLLAI. Topologically, residues 86-91 are extracellular; the sequence is AATYLH. A helical transmembrane segment spans residues 92–109; the sequence is FGQVWVFVLSLIGLVPLA. Residues 110 to 126 are Cytoplasmic-facing; it reads ERLSFLTEQIAFYTGPT. A helical transmembrane segment spans residues 127–147; sequence VGGLLNATFGNVTEVIIALLA. Positions 136-171 are cation selection; that stretch reads GNVTEVIIALLALREGKIEVVKCSLLGSILSNLLLV. The Extracellular segment spans residues 148-160; sequence LREGKIEVVKCSL. A helical transmembrane segment spans residues 161–181; the sequence is LGSILSNLLLVLGTSLFLAGI. At 182-194 the chain is on the cytoplasmic side; it reads ANLRAHQPYDTKQ. Residues 195-215 traverse the membrane as a helical segment; the sequence is AHVNTALLMLAVLCHSLPLML. The Extracellular segment spans residues 216 to 232; that stretch reads RYAVTSGDHAIVSGDAA. The helical transmembrane segment at 233-253 threads the bilayer; sequence LHLSRACSILMLIAYLAYLFF. The Cytoplasmic segment spans residues 254–283; that stretch reads QLNTHRQLFEPQQVEDDDDDDLVIAQDDEP. Residues 284–304 form a helical membrane-spanning segment; it reads VLGFSSAMIWLALMTLLTALL. The Extracellular segment spans residues 305–327; it reads SGYVVSTIEAASESWELSVSFIS. The helical transmembrane segment at 328–348 threads the bilayer; it reads IILLPIVGNAAEHAGAVIFAL. The cation selection stretch occupies residues 335-370; the sequence is GNAAEHAGAVIFALKNKMDITLGVSLGSATQISMFV. Topologically, residues 349 to 364 are cytoplasmic; that stretch reads KNKMDITLGVSLGSAT. A helical membrane pass occupies residues 365 to 385; that stretch reads QISMFVVPVSVIVAWTMGIPM. Over 386–388 the chain is Extracellular; the sequence is DLD. A helical transmembrane segment spans residues 389–409; sequence FNLLETGSLFLAILVTAFTLQ. The Cytoplasmic segment spans residues 410–414; that stretch reads EGESH. Residues 415-435 form a helical membrane-spanning segment; the sequence is YLKGLILVLCYAVISVCFFVI. The Extracellular portion of the chain corresponds to 436 to 453; that stretch reads RRRSAGGTDGVHHLDVIV.

It belongs to the Ca(2+):cation antiporter (CaCA) (TC 2.A.19) family. Cation/proton exchanger (CAX) subfamily. As to expression, expressed in embryo and roots.

Its subcellular location is the vacuole membrane. Vacuolar cation/proton exchanger (CAX). Translocates Ca(2+) and other metal ions into vacuoles using the proton gradient formed by H(+)-ATPase and H(+)-pyrophosphatase. This Oryza sativa subsp. japonica (Rice) protein is Vacuolar cation/proton exchanger 1b (CAX1b).